The chain runs to 585 residues: Staphyloferrin A synthase (585 aa).

The protein belongs to the IucA/IucC family.

It carries out the reaction N(5)-[(S)-citryl]-D-ornithine + citrate + ATP = staphyloferrin A + AMP + diphosphate + H(+). It functions in the pathway siderophore biosynthesis. Involved in the biosynthesis of the siderophore staphyloferrin A. Catalyzes the ATP-dependent condensation of a citryl-D-ornithine intermediate, produced by SfnaD, and citrate to form staphyloferrin A. In Staphylococcus aureus (strain NCTC 8325 / PS 47), this protein is Staphyloferrin A synthase.